Here is a 32-residue protein sequence, read N- to C-terminus: Zinc metalloproteinase/disintegrin-like CdtV1 (32 aa).

2 disulfide bridges follow: Cys-5–Cys-14 and Cys-7–Cys-15.

This sequence belongs to the venom metalloproteinase (M12B) family. P-II subfamily. P-IIa sub-subfamily. Monomer. In terms of tissue distribution, expressed by the venom gland.

It is found in the secreted. Its function is as follows. Snake venom metalloproteinase that impairs hemostasis in the envenomed animal. This is Zinc metalloproteinase/disintegrin-like CdtV1 from Crotalus durissus terrificus (South American rattlesnake).